The chain runs to 354 residues: DNA integrity scanning protein DisA (354 aa).

Positions 6 to 144 (DDELKKILKI…GDIKYVLRDS (139 aa)) constitute a DAC domain. Residues G73, L91, and 104-108 (TRHRT) contribute to the ATP site.

This sequence belongs to the DisA family. In terms of assembly, homooctamer. Requires Mg(2+) as cofactor.

The catalysed reaction is 2 ATP = 3',3'-c-di-AMP + 2 diphosphate. Participates in a DNA-damage check-point that is active prior to asymmetric division when DNA is damaged. DisA forms globular foci that rapidly scan along the chromosomes during sporulation, searching for lesions. When a lesion is present, DisA pauses at the lesion site. This triggers a cellular response that culminates in a temporary block in sporulation initiation. Functionally, also has diadenylate cyclase activity, catalyzing the condensation of 2 ATP molecules into cyclic di-AMP (c-di-AMP). c-di-AMP acts as a signaling molecule that couples DNA integrity with progression of sporulation. The rise in c-di-AMP level generated by DisA while scanning the chromosome, operates as a positive signal that advances sporulation; upon encountering a lesion, the DisA focus arrests at the damaged site and halts c-di-AMP synthesis. This chain is DNA integrity scanning protein DisA, found in Clostridium perfringens (strain 13 / Type A).